We begin with the raw amino-acid sequence, 422 residues long: S100P-binding protein (422 aa).

Disordered regions lie at residues 1–28 (MMCS…SWSS), 61–135 (LKDD…TPAK), and 170–292 (YVSE…DSGK). Residues 80–90 (DDSRNVEKGEK) show a composition bias toward basic and acidic residues. Ser-195 carries the phosphoserine modification. The segment covering 231–241 (VSDKNMSDSKK) has biased composition (basic and acidic residues). Over residues 255-269 (TPNTGSSRRNGSYKS) the composition is skewed to polar residues. Residues 274–283 (KLPVSSSSSK) show a composition bias toward low complexity.

As to quaternary structure, interacts with S100P.

It is found in the nucleus. This chain is S100P-binding protein, found in Bos taurus (Bovine).